Here is a 519-residue protein sequence, read N- to C-terminus: Glucose-1-phosphate adenylyltransferase large subunit 3, chloroplastic/amyloplastic (519 aa).

Residues Met-1–Arg-74 constitute a chloroplast transit peptide.

It belongs to the bacterial/plant glucose-1-phosphate adenylyltransferase family. In terms of assembly, heterotetramer composed of two small and two large subunits. As to expression, expressed in stems.

The protein resides in the plastid. Its subcellular location is the chloroplast. The enzyme catalyses alpha-D-glucose 1-phosphate + ATP + H(+) = ADP-alpha-D-glucose + diphosphate. Its pathway is glycan biosynthesis; starch biosynthesis. Its activity is regulated as follows. Activated by 3'phosphoglycerate, inhibited by orthophosphate. Allosteric regulation. Its function is as follows. Involved in synthesis of starch. Catalyzes the synthesis of ADP-glucose, a molecule that serves as an activated glycosyl donor for alpha-1,4-glucan synthesis. Essential for starch synthesis in leaf chloroplasts. The protein is Glucose-1-phosphate adenylyltransferase large subunit 3, chloroplastic/amyloplastic of Oryza sativa subsp. japonica (Rice).